Consider the following 304-residue polypeptide: uncharacterized protein (304 aa).

Belongs to the mimivirus L137 family.

This is an uncharacterized protein from Acanthamoeba polyphaga mimivirus (APMV).